The primary structure comprises 403 residues: GDSL esterase/lipase At1g28590 (403 aa).

Positions 1 to 27 (MASLDSLPAMKLVRFILSTLLVTSVNS) are cleaved as a signal peptide. Serine 43 (nucleophile) is an active-site residue. N-linked (GlcNAc...) asparagine glycans are attached at residues asparagine 139 and asparagine 323. Active-site residues include aspartate 346 and histidine 349.

Belongs to the 'GDSL' lipolytic enzyme family.

The protein resides in the secreted. The chain is GDSL esterase/lipase At1g28590 from Arabidopsis thaliana (Mouse-ear cress).